A 120-amino-acid polypeptide reads, in one-letter code: Ribosome-binding factor A (120 aa).

This sequence belongs to the RbfA family. As to quaternary structure, monomer. Binds 30S ribosomal subunits, but not 50S ribosomal subunits or 70S ribosomes.

It localises to the cytoplasm. Its function is as follows. One of several proteins that assist in the late maturation steps of the functional core of the 30S ribosomal subunit. Associates with free 30S ribosomal subunits (but not with 30S subunits that are part of 70S ribosomes or polysomes). Required for efficient processing of 16S rRNA. May interact with the 5'-terminal helix region of 16S rRNA. The polypeptide is Ribosome-binding factor A (Lactobacillus delbrueckii subsp. bulgaricus (strain ATCC 11842 / DSM 20081 / BCRC 10696 / JCM 1002 / NBRC 13953 / NCIMB 11778 / NCTC 12712 / WDCM 00102 / Lb 14)).